Reading from the N-terminus, the 75-residue chain is Protein TM_1420 (75 aa).

4 residues coordinate [2Fe-2S] cluster: Cys6, Cys11, Cys39, and Cys43.

Requires [2Fe-2S] cluster as cofactor.

Might be part of a multi-protein complex, possibly involved in metal cluster assembly. This chain is Protein TM_1420, found in Thermotoga maritima (strain ATCC 43589 / DSM 3109 / JCM 10099 / NBRC 100826 / MSB8).